The primary structure comprises 484 residues: Auxin transporter-like protein 2 (484 aa).

The Cytoplasmic portion of the chain corresponds to 1–59 (MLPQKQGEEAIVSSFNETDQQEGVVGREEEVEDHSFSVKNFLWHGGSVWDAWFSCASNQ). A helical membrane pass occupies residues 60–77 (VAQVLLTLPYSFSQLGML). The Extracellular segment spans residues 78–79 (SG). The helical transmembrane segment at 80–100 (ILLQVFYGILGSWTAYLISVL) threads the bilayer. Topologically, residues 101–135 (YVEYRSRKEKENVNFKNHVIQWFEVLDGLLGPYWK) are cytoplasmic. A helical membrane pass occupies residues 136 to 156 (ALGLAFNCTFLLFGSVIQLIA). Topologically, residues 157–172 (CASNIYYINDNLDKRT) are extracellular. Residues 173-193 (WTYIFGACCATTVFIPSFHNY) form a helical membrane-spanning segment. Over 194–196 (RIW) the chain is Cytoplasmic. Residues 197–217 (SFLGLGMTTYTAWYLTIASIV) form a helical membrane-spanning segment. The Extracellular segment spans residues 218-232 (HGQAENVTHTGPKKL). N-linked (GlcNAc...) asparagine glycosylation is present at Asn-223. Residues 233–253 (VLYFTGATNILYTFGGHAVTV) traverse the membrane as a helical segment. The Cytoplasmic segment spans residues 254–266 (EIMHAMWKPQKFK). The helical transmembrane segment at 267–287 (YIYLMATLYVFTLTIPSATAV) threads the bilayer. The Extracellular portion of the chain corresponds to 288-314 (YWAFGDELLNHSNAFSLLPKNGWRDGA). Asn-297 carries N-linked (GlcNAc...) asparagine glycosylation. Residues 315-335 (VILMLIHQFITFGFACTPLYF) traverse the membrane as a helical segment. Residues 336–356 (VWEKVIGMHDTRSICLRALAR) are Cytoplasmic-facing. The chain crosses the membrane as a helical span at residues 357 to 377 (LPVVIPIWFLAIIFPFFGPIN). Residue Ser-378 is a topological domain, extracellular. Residues 379-399 (AVGALLVSFTVYIIPSAAHML) form a helical membrane-spanning segment. At 400 to 425 (TYRKASARKNAAEKPPFFMPSWTAMY) the chain is on the cytoplasmic side. The chain crosses the membrane as a helical span at residues 426–446 (IFNAFIVIWVLVVGFGFGGWA). At 447 to 484 (SMTNFIRQIDTFGLFAKCYQCKPPPVMAAAPPPHALHH) the chain is on the extracellular side.

Belongs to the amino acid/polyamine transporter 2 family. Amino acid/auxin permease (AAAP) (TC 2.A.18.1) subfamily. In terms of tissue distribution, shoots and roots of nodulating plants. Higher levels in roots, flowers and stems, lower in nodules, leaves, petioles and shoot apices.

The protein resides in the cell membrane. Functionally, carrier protein involved in proton-driven auxin influx. Mediates the formation of auxin gradient from developing leaves (site of auxin biosynthesis) to tips by contributing to the loading of auxin in vascular tissues and facilitating acropetal (base to tip) auxin transport within inner tissues of the root apex, and basipetal (tip to base) auxin transport within outer tissues of the root apex. May be involved in lateral roots and nodules formation. The protein is Auxin transporter-like protein 2 (LAX2) of Medicago truncatula (Barrel medic).